The primary structure comprises 1390 residues: Nuclear pore complex protein Nup155 (1390 aa).

Ser525 is a glycosylation site (O-linked (GlcNAc) serine). Residues 598–632 (GSPMYSSSPVPTGSPYPNPSSLGTPSHGAQPPTMS) are disordered. Residue Lys739 forms a Glycyl lysine isopeptide (Lys-Gly) (interchain with G-Cter in SUMO2) linkage. Residues 984–1011 (QSKAAPQSPSVPKKPGPPVLSSDPNMLS) form a disordered region. Ser1056 is modified (phosphoserine).

The protein belongs to the non-repetitive/WGA-negative nucleoporin family. Interacts with GLE1. Able to form a heterotrimer with GLE1 and NUP42 in vitro. Forms a complex with NUP35, NUP93, NUP205 and lamin B. Post-translationally, phosphorylated. Phosphorylation and dephosphorylation may be important for the function of NUP155 and may play a role in the reversible disassembly of the nuclear pore complex during mitosis. Disulfide-linked to NUP62. The inner channel of the NPC has a different redox environment from the cytoplasm and allows the formation of interchain disulfide bonds between some nucleoporins, the significant increase of these linkages upon oxidative stress reduces the permeability of the NPC.

The protein resides in the nucleus. The protein localises to the nuclear pore complex. It localises to the nucleus membrane. Functionally, essential component of nuclear pore complex. Could be essessential for embryogenesis. Nucleoporins may be involved both in binding and translocating proteins during nucleocytoplasmic transport. The polypeptide is Nuclear pore complex protein Nup155 (Nup155) (Rattus norvegicus (Rat)).